Reading from the N-terminus, the 148-residue chain is Snaclec 4 (148 aa).

The first 23 residues, 1–23, serve as a signal peptide directing secretion; that stretch reads MGRFIFVSFSLLVVFFSLSGTEA. Positions 34–148 constitute a C-type lectin domain; that stretch reads YDQNCYKAFE…DTQFRLQEPG (115 aa).

It belongs to the snaclec family. Heterodimer; disulfide-linked. Post-translationally, contains disulfide bonds. As to expression, expressed by the venom gland.

The protein resides in the secreted. Its function is as follows. Interferes with one step of hemostasis (modulation of platelet aggregation, or coagulation cascade, for example). In Echis pyramidum leakeyi (Leakey's carpet viper), this protein is Snaclec 4.